A 242-amino-acid chain; its full sequence is Ribosomal RNA small subunit methyltransferase G (242 aa).

Residues glycine 79, 130–131, and glutamine 149 each bind S-adenosyl-L-methionine; that span reads VE.

The protein belongs to the methyltransferase superfamily. RNA methyltransferase RsmG family.

It is found in the cytoplasm. In terms of biological role, specifically methylates the N7 position of a guanine in 16S rRNA. The polypeptide is Ribosomal RNA small subunit methyltransferase G (Mycoplasmoides gallisepticum (strain R(low / passage 15 / clone 2)) (Mycoplasma gallisepticum)).